We begin with the raw amino-acid sequence, 172 residues long: Austinoid biosynthesis clusters protein J (172 aa).

Belongs to the trt14 isomerase family. As to quaternary structure, homodimer.

It participates in secondary metabolite biosynthesis; terpenoid biosynthesis. In terms of biological role, part of the gene cluster B that mediates the biosynthesis of the fungal meroterpenoid acetoxydehydroaustin. The first step of the pathway is the synthesis of 3,5-dimethylorsellinic acid by the polyketide synthase ausA. 3,5-dimethylorsellinic acid is then prenylated by the polyprenyl transferase ausN. Further epoxidation by the FAD-dependent monooxygenase ausM and cyclization by the probable terpene cyclase ausL lead to the formation of protoaustinoid A. Protoaustinoid A is then oxidized to spiro-lactone preaustinoid A3 by the combined action of the FAD-binding monooxygenases ausB and ausC, and the dioxygenase ausE. Acid-catalyzed keto-rearrangement and ring contraction of the tetraketide portion of preaustinoid A3 by ausJ lead to the formation of preaustinoid A4. The aldo-keto reductase ausK, with the help of ausH, is involved in the next step by transforming preaustinoid A4 into isoaustinone which is in turn hydroxylated by the P450 monooxygenase ausI to form austinolide. The cytochrome P450 monooxygenase ausG then modifies austinolide to austinol. Austinol is further acetylated to austin by the O-acetyltransferase ausP, which spontaneously changes to dehydroaustin. The cytochrome P450 monooxygenase then converts dehydroaustin is into 7-dehydrodehydroaustin. The hydroxylation catalyzed by ausR permits the second O-acetyltransferase ausQ to add an additional acetyl group to the molecule, leading to the formation of acetoxydehydroaustin. Due to genetic rearrangements of the clusters and the subsequent loss of some enzymes, the end product of the Penicillium brasilianum austinoid biosynthesis clusters is acetoxydehydroaustin. In Penicillium brasilianum, this protein is Austinoid biosynthesis clusters protein J.